The following is a 220-amino-acid chain: Putative respiratory nitrate reductase subunit Rieske (220 aa).

Residues 118 to 206 (KAPTLLVRHA…ITVSSEGYLI (89 aa)) form the Rieske domain. 4 residues coordinate [2Fe-2S] cluster: Cys151, His153, Cys168, and His171. Residues Cys156 and Cys170 are joined by a disulfide bond.

As to quaternary structure, probable multiprotein complex; a catalytic heterodimer of an alpha and beta chain is proposed to associate with additional subunits involved in membrane attachment and electron transfer. [2Fe-2S] cluster is required as a cofactor.

The protein resides in the cell membrane. Its function is as follows. The respiratory membrane-bound nitrate reductase enzyme complex plays a role in generation of metabolic energy by using nitrate as a terminal electron acceptor during anaerobic conditions. Proposed Rieske subunit involved in a protonmotive Q-cycle mechanism-based electron transfer electrons to the beta subunit. The chain is Putative respiratory nitrate reductase subunit Rieske (narB) from Haloferax mediterranei (strain ATCC 33500 / DSM 1411 / JCM 8866 / NBRC 14739 / NCIMB 2177 / R-4) (Halobacterium mediterranei).